Consider the following 127-residue polypeptide: MRSAYYVLTALLVVASSQVAAESGHQLQAYGHDRITDDNAAMKSLSTRFLRESRDVHGNVANEERSVYSVLASMINEGIEKMPRTAEVLKRKSRSIKDSDKVPHEAKLVNEMFHAAKAKEMMQSAEE.

The N-terminal stretch at 1 to 21 (MRSAYYVLTALLVVASSQVAA) is a signal peptide. Positions 48-65 (RFLRESRDVHGNVANEER) match the RxLR-dEER motif.

This sequence belongs to the RxLR effector family.

It is found in the secreted. The protein resides in the host nucleus. It localises to the host cytoplasm. Its function is as follows. Secreted effector that completely suppresses the host cell death induced by cell death-inducing proteins. The protein is Secreted RxLR effector protein 7 of Plasmopara viticola (Downy mildew of grapevine).